A 160-amino-acid chain; its full sequence is Protein shisa-like-2B (160 aa).

A helical transmembrane segment spans residues 65 to 85 (IGALIGLGIAALVLLAFVISV).

Belongs to the shisa family.

Its subcellular location is the membrane. This Homo sapiens (Human) protein is Protein shisa-like-2B.